A 408-amino-acid polypeptide reads, in one-letter code: Imidazolonepropionase (408 aa).

Fe(3+) contacts are provided by H73 and H75. 2 residues coordinate Zn(2+): H73 and H75. Residues R82, Y145, and H178 each coordinate 4-imidazolone-5-propanoate. Y145 contributes to the N-formimidoyl-L-glutamate binding site. H243 provides a ligand contact to Fe(3+). Position 243 (H243) interacts with Zn(2+). Q246 is a binding site for 4-imidazolone-5-propanoate. D318 contacts Fe(3+). D318 lines the Zn(2+) pocket. The N-formimidoyl-L-glutamate site is built by N320 and G322. S323 lines the 4-imidazolone-5-propanoate pocket.

It belongs to the metallo-dependent hydrolases superfamily. HutI family. Requires Zn(2+) as cofactor. Fe(3+) is required as a cofactor.

It localises to the cytoplasm. The enzyme catalyses 4-imidazolone-5-propanoate + H2O = N-formimidoyl-L-glutamate. It functions in the pathway amino-acid degradation; L-histidine degradation into L-glutamate; N-formimidoyl-L-glutamate from L-histidine: step 3/3. In terms of biological role, catalyzes the hydrolytic cleavage of the carbon-nitrogen bond in imidazolone-5-propanoate to yield N-formimidoyl-L-glutamate. It is the third step in the universal histidine degradation pathway. In Shewanella sp. (strain MR-4), this protein is Imidazolonepropionase.